The sequence spans 84 residues: Toxin BmKaTx13 (84 aa).

Residues 1–19 (MNYLVMISFALLLMKGVES) form the signal peptide. Positions 21-83 (RDAYIAKPEN…VPIRVPGKCH (63 aa)) constitute an LCN-type CS-alpha/beta domain. 4 disulfide bridges follow: cysteine 31–cysteine 82, cysteine 35–cysteine 55, cysteine 41–cysteine 65, and cysteine 45–cysteine 67. Arginine 84 is a propeptide (removed by a carboxypeptidase).

The protein belongs to the long (4 C-C) scorpion toxin superfamily. Sodium channel inhibitor family. Alpha subfamily. Expressed by the venom gland.

The protein resides in the secreted. In terms of biological role, alpha toxins bind voltage-independently at site-3 of sodium channels (Nav) and inhibit the inactivation of the activated channels, thereby blocking neuronal transmission. This toxin is active against mammals. This is Toxin BmKaTx13 from Olivierus martensii (Manchurian scorpion).